The following is a 625-amino-acid chain: Glucose dehydrogenase [FAD, quinone] (625 aa).

Positions 1–42 are cleaved as a signal peptide; the sequence is MSASASACDCLVGVPTGPTLASTCGGSAFMLFMGLLEVFIRS. Residue 66 to 95 coordinates FAD; sequence DFIVIGGGSAGSVVASRLSEVPQWKVLLIE. Histidine 544 (proton acceptor) is an active-site residue. A non-standard amino acid (selenocysteine) is located at residue selenocysteine 613.

This sequence belongs to the GMC oxidoreductase family. FAD is required as a cofactor.

The protein resides in the secreted. The enzyme catalyses a quinone + D-glucose = D-glucono-1,5-lactone + a quinol. Functionally, essential for cuticular modification during development. The chain is Glucose dehydrogenase [FAD, quinone] (Gld) from Drosophila melanogaster (Fruit fly).